The sequence spans 506 residues: DEAD-box ATP-dependent RNA helicase CshA (506 aa).

Residues 2 to 30 (QNFKELGISDNTVQSLESMGFKEPTPIQK) carry the Q motif motif. The Helicase ATP-binding domain maps to 33–203 (IPYALQGIDI…QQFMKSPKII (171 aa)). Residue 46-53 (AQTGTGKT) coordinates ATP. The DEAD box motif lies at 150-153 (DEAD). The region spanning 214-375 (QIEEFYTIVK…LRPPHRKEVL (162 aa)) is the Helicase C-terminal domain. The tract at residues 436–506 (EKPLSRKGRN…KGRTFADHQK (71 aa)) is disordered. Positions 468-480 (KRSKGYSSKKKST) are enriched in basic residues.

It belongs to the DEAD box helicase family. CshA subfamily. As to quaternary structure, oligomerizes, may be a member of the RNA degradosome.

It is found in the cytoplasm. It catalyses the reaction ATP + H2O = ADP + phosphate + H(+). DEAD-box RNA helicase possibly involved in RNA degradation. Unwinds dsRNA in both 5'- and 3'-directions, has RNA-dependent ATPase activity. This Staphylococcus aureus (strain bovine RF122 / ET3-1) protein is DEAD-box ATP-dependent RNA helicase CshA.